Here is a 142-residue protein sequence, read N- to C-terminus: Large ribosomal subunit protein uL11 (142 aa).

It belongs to the universal ribosomal protein uL11 family. Part of the ribosomal stalk of the 50S ribosomal subunit. Interacts with L10 and the large rRNA to form the base of the stalk. L10 forms an elongated spine to which L12 dimers bind in a sequential fashion forming a multimeric L10(L12)X complex. Post-translationally, one or more lysine residues are methylated.

In terms of biological role, forms part of the ribosomal stalk which helps the ribosome interact with GTP-bound translation factors. In Lachnoclostridium phytofermentans (strain ATCC 700394 / DSM 18823 / ISDg) (Clostridium phytofermentans), this protein is Large ribosomal subunit protein uL11.